The primary structure comprises 946 residues: Bifunctional glutamine synthetase adenylyltransferase/adenylyl-removing enzyme (946 aa).

The segment at 1–440 is adenylyl removase; the sequence is MKPLSSPLQQ…VFNELIGDDE (440 aa). The interval 449–946 is adenylyl transferase; the sequence is SEQWRELWQD…ASWQKWLVEE (498 aa).

The protein belongs to the GlnE family. Requires Mg(2+) as cofactor.

The catalysed reaction is [glutamine synthetase]-O(4)-(5'-adenylyl)-L-tyrosine + phosphate = [glutamine synthetase]-L-tyrosine + ADP. It catalyses the reaction [glutamine synthetase]-L-tyrosine + ATP = [glutamine synthetase]-O(4)-(5'-adenylyl)-L-tyrosine + diphosphate. Involved in the regulation of glutamine synthetase GlnA, a key enzyme in the process to assimilate ammonia. When cellular nitrogen levels are high, the C-terminal adenylyl transferase (AT) inactivates GlnA by covalent transfer of an adenylyl group from ATP to specific tyrosine residue of GlnA, thus reducing its activity. Conversely, when nitrogen levels are low, the N-terminal adenylyl removase (AR) activates GlnA by removing the adenylyl group by phosphorolysis, increasing its activity. The regulatory region of GlnE binds the signal transduction protein PII (GlnB) which indicates the nitrogen status of the cell. The protein is Bifunctional glutamine synthetase adenylyltransferase/adenylyl-removing enzyme of Escherichia coli O127:H6 (strain E2348/69 / EPEC).